The following is a 204-amino-acid chain: Glycerol-3-phosphate acyltransferase (204 aa).

A run of 5 helical transmembrane segments spans residues 8-28, 53-73, 81-101, 116-136, and 155-175; these read ILIF…CYIF, VPAA…VVIA, FITA…IFFG, FGFS…VAII, and VIFT…IIIL.

Belongs to the PlsY family. In terms of assembly, probably interacts with PlsX.

The protein localises to the cell inner membrane. The enzyme catalyses an acyl phosphate + sn-glycerol 3-phosphate = a 1-acyl-sn-glycero-3-phosphate + phosphate. Its pathway is lipid metabolism; phospholipid metabolism. In terms of biological role, catalyzes the transfer of an acyl group from acyl-phosphate (acyl-PO(4)) to glycerol-3-phosphate (G3P) to form lysophosphatidic acid (LPA). This enzyme utilizes acyl-phosphate as fatty acyl donor, but not acyl-CoA or acyl-ACP. This chain is Glycerol-3-phosphate acyltransferase, found in Francisella tularensis subsp. novicida (strain U112).